Here is a 185-residue protein sequence, read N- to C-terminus: Ribosome-recycling factor (185 aa).

It belongs to the RRF family.

The protein resides in the cytoplasm. Functionally, responsible for the release of ribosomes from messenger RNA at the termination of protein biosynthesis. May increase the efficiency of translation by recycling ribosomes from one round of translation to another. This chain is Ribosome-recycling factor, found in Bacillus mycoides (strain KBAB4) (Bacillus weihenstephanensis).